The following is a 110-amino-acid chain: UPF0122 protein SAR1212 (110 aa).

It belongs to the UPF0122 family.

Its function is as follows. Might take part in the signal recognition particle (SRP) pathway. This is inferred from the conservation of its genetic proximity to ftsY/ffh. May be a regulatory protein. The chain is UPF0122 protein SAR1212 from Staphylococcus aureus (strain MRSA252).